A 74-amino-acid polypeptide reads, in one-letter code: Translational regulator CsrA (74 aa).

This sequence belongs to the CsrA/RsmA family. Homodimer. The beta-strands of each monomer intercalate to form a hydrophobic core while the alpha-helices form wings that extend away from the core. Two molecules of FliW interact with 1 homodimer. mRNA and FliW bind to different sites on CsrA.

The protein resides in the cytoplasm. Functionally, a translational regulator that binds mRNA to regulate translation initiation and/or mRNA stability. Usually binds in the 5'-UTR at or near the Shine-Dalgarno sequence preventing ribosome-binding, thus repressing translation. Represses expression of flagellin (hag) in a post-transcriptional fashion. Specifically binds to 2 sites in the 5'-UTR of hag mRNA in a cooperative fashion; the second site overlaps the Shine-Dalgarno sequence and prevents 30S ribosomal subunit binding. Mutation of either binding site abolishes CsrA regulation of hag expression. Repression is greater in the 1A96 than 168 genetic background and higher in minimal than rich medium. Translation repression is antagonized by FliW. Partner switching by flagellin between FliW and CsrA provides a flagellar assembly checkpoint to tightly control the timing of flagellin synthesis. Flagellin binds to assembly factor FliW, freeing CsrA to repress translation of the flagellin mRNA. When the flagellar hook is assembled flagellin is secreted, depleting intracellular flagellin, which frees FliW to interact with CsrA and inhibits CsrA binding to mRNA. This derepresses flagellin translation and provides protein for flagellar assembly. Once the flagellar filament is completed cytoplasmic flagellin levels rise and CsrA translation repression of flagellin reinitiates. Overexpression leads to a dramatic reduction in motility, a significant reduction in flagellin synthesis and reduced flagella assembly. The chain is Translational regulator CsrA from Bacillus subtilis (strain 168).